We begin with the raw amino-acid sequence, 293 residues long: ATP synthase gamma chain (293 aa).

It belongs to the ATPase gamma chain family. F-type ATPases have 2 components, CF(1) - the catalytic core - and CF(0) - the membrane proton channel. CF(1) has five subunits: alpha(3), beta(3), gamma(1), delta(1), epsilon(1). CF(0) has three main subunits: a, b and c.

The protein resides in the cell membrane. In terms of biological role, produces ATP from ADP in the presence of a proton gradient across the membrane. The gamma chain is believed to be important in regulating ATPase activity and the flow of protons through the CF(0) complex. The chain is ATP synthase gamma chain from Streptococcus sanguinis.